The primary structure comprises 309 residues: MTMRASLAIENFLEMMSAERGAAQNTLESYRRDLEAAAEELAAKGVNLAEAETGHIRMTLDTMAAQGFAPTSQARRLSALRQFFRFLYSEGFRQDDPTGILYAPKKQKPLPKIMSVENVGKLLDRAALEANEAAEPGERIKALRLHALLETLYATGLRVSELVGLPVTVARTDHRFLLVRGKGSKDRMVPLSRKARDALQKFLTLRDSLPGSDDNPWLFPAFSESGHLARQVFARELKGLAARAGLAASSVSPHVLRHAFASHLLQNGADLRTVQQLLGHADISTTQIYTHVLEERLHKLVSEHHPLAD.

In terms of domain architecture, Core-binding (CB) spans methionine 3–tyrosine 88. A Tyr recombinase domain is found at proline 109 to serine 302. Catalysis depends on residues arginine 158, lysine 182, histidine 254, arginine 257, and histidine 280. Tyrosine 289 (O-(3'-phospho-DNA)-tyrosine intermediate) is an active-site residue.

This sequence belongs to the 'phage' integrase family. XerD subfamily. In terms of assembly, forms a cyclic heterotetrameric complex composed of two molecules of XerC and two molecules of XerD.

The protein localises to the cytoplasm. Site-specific tyrosine recombinase, which acts by catalyzing the cutting and rejoining of the recombining DNA molecules. The XerC-XerD complex is essential to convert dimers of the bacterial chromosome into monomers to permit their segregation at cell division. It also contributes to the segregational stability of plasmids. The sequence is that of Tyrosine recombinase XerD from Brucella melitensis biotype 1 (strain ATCC 23456 / CCUG 17765 / NCTC 10094 / 16M).